Here is a 747-residue protein sequence, read N- to C-terminus: Potassium transporter 20 (747 aa).

At 1-47 (MSVQEDDDAAGPEVDRLRRHDSFYGDAEKVSNDKSHGTGENWARTLQ) the chain is on the cytoplasmic side. The chain crosses the membrane as a helical span at residues 48–68 (LAFQSIGVVYGDVGTSPLYVY). Over 69–84 (SSTFPDGVKHPDDLVG) the chain is Extracellular. Residues 85-105 (VLSLMLYTLILIPMVKYVFIV) traverse the membrane as a helical segment. The Cytoplasmic segment spans residues 106–171 (LYANDNGDGG…QKLESSNAAK (66 aa)). The helical transmembrane segment at 172–192 (IALFTITILGTSMVMGDGTLT) threads the bilayer. The Extracellular portion of the chain corresponds to 193-209 (PAISVLSAVSGIREKAP). The chain crosses the membrane as a helical span at residues 210 to 230 (SLTQLQVVWISVPILIVLFSV). Over 231–237 (QRFGTDK) the chain is Cytoplasmic. The helical transmembrane segment at 238 to 258 (VGYSFAPVISVWFVLIAGIGA) threads the bilayer. Residues 259 to 288 (YNLAVHEITILRAFNPMYIIDYFRRNGKEA) lie on the Extracellular side of the membrane. A helical membrane pass occupies residues 289–309 (WVSLGGAVLCITGTEAMFADL). Over 310–318 (GHFNIRAIQ) the chain is Cytoplasmic. Residues 319-339 (LSFTCVLFPSVALCYMGQAAY) form a helical membrane-spanning segment. The Extracellular segment spans residues 340-353 (LRKFPEDVGDTFYK). Residues 354 to 374 (SLPAPLFWPVFVVAIMAAIIA) form a helical membrane-spanning segment. At 375-410 (SQAMLSGAFAILSKALPLGCFPRVEVVHTSNKYEGQ) the chain is on the cytoplasmic side. The chain crosses the membrane as a helical span at residues 411 to 431 (VYIPEVNFLIGVASVAITVAF). Topologically, residues 432 to 442 (QTTANIGNAYG) are extracellular. A helical membrane pass occupies residues 443-463 (ICVVMVFSITTHLMTVVMLLI). Topologically, residues 464–469 (WKVRLP) are cytoplasmic. A helical transmembrane segment spans residues 470–490 (FIAAFYVVFTFTEFLYLSSIL). The Extracellular segment spans residues 491 to 496 (SKFAEG). A helical transmembrane segment spans residues 497-517 (GYLPFCFSLVLMALMATWHYV). At 518–747 (HVKRYWYELD…LLKVGITYEI (230 aa)) the chain is on the cytoplasmic side.

The protein belongs to the HAK/KUP transporter (TC 2.A.72.3) family.

It localises to the membrane. High-affinity potassium transporter. This chain is Potassium transporter 20 (HAK20), found in Oryza sativa subsp. japonica (Rice).